Reading from the N-terminus, the 377-residue chain is GDSL esterase/lipase 4 (377 aa).

An N-terminal signal peptide occupies residues 1–21; the sequence is MASPRFNSIIIILFICTISLS. Catalysis depends on S44, which acts as the Nucleophile. N-linked (GlcNAc...) asparagine glycans are attached at residues N135, N188, N194, N207, and N241. Catalysis depends on residues D342 and H345. A glycan (N-linked (GlcNAc...) asparagine) is linked at N364.

This sequence belongs to the 'GDSL' lipolytic enzyme family.

The protein resides in the secreted. The sequence is that of GDSL esterase/lipase 4 (GLIP4) from Arabidopsis thaliana (Mouse-ear cress).